A 1124-amino-acid polypeptide reads, in one-letter code: Transient-receptor-potential-like protein (1124 aa).

The interval 1-24 (MGRKKKLPTGVSSGVSHASSAPKS) is disordered. The Cytoplasmic segment spans residues 1-340 (MGRKKKLPTG…GFRRKSIVDK (340 aa)). Residues 10-21 (GVSSGVSHASSA) show a composition bias toward low complexity. 3 ANK repeats span residues 40 to 69 (LEEK…RHQH), 78 to 107 (LGRR…ETKD), and 152 to 181 (PDIT…AVPV). The helical transmembrane segment at 341-361 (VICIAQVAVLFPLYCLIYMCA) threads the bilayer. The Extracellular segment spans residues 362–373 (PNCRTGQLMRKP). The helical transmembrane segment at 374–394 (FMKFLIHASSYLFFLFILILV) threads the bilayer. Over 395–431 (SQRADDDFVRIFGTTRMKKELAEQELRQRGQTPSKLE) the chain is Cytoplasmic. A helical membrane pass occupies residues 432–452 (LIVVMYVIGFVWEEVQEIFAV). Residues 453-512 (GMKSYLRNMWNFIDFLRNSLYVSVMCLRAFAYIQQATEIARDPQMAYIPREKWHDFDPQL) are Extracellular-facing. A helical transmembrane segment spans residues 513-533 (IAEGLFAAANVFSALKLVHLF). The Cytoplasmic portion of the chain corresponds to 534–548 (SINPHLGPLQISLGR). A helical transmembrane segment spans residues 549-569 (MVIDIVKFFFIYTLVLFAFAC). Topologically, residues 570 to 645 (GLNQLLWYFA…GIKSYTRFWG (76 aa)) are extracellular. Residues 646 to 666 (LLMFGSYSVINVIVLLNLLIA) form a helical membrane-spanning segment. Topologically, residues 667–1124 (MMSNSYAMID…TSPQRPKHRN (458 aa)) are cytoplasmic. Calmodulin-binding stretches follow at residues 710–728 (SVKW…IDRQ) and 853–895 (IPSK…SQIG). Disordered stretches follow at residues 978–1013 (RAMA…GVSH) and 1031–1124 (LIAN…KHRN). A compositionally biased stretch (low complexity) spans 1035–1063 (SAPSAPTAPPKKSAPTAPTPTYKPTTHAP). Basic and acidic residues-rich tracts occupy residues 1069–1081 (GNRE…DGVR) and 1090–1106 (HVVD…RDNV). Residues 1107–1118 (SDISSIASTSPQ) show a composition bias toward polar residues.

Belongs to the transient receptor (TC 1.A.4) family. STrpC subfamily. In terms of assembly, forms heteromultimers with Trpgamma and, to a lower extent, with trp. Interacts with Fkbp59 in vivo and is found in the inaD signaling complex. As to expression, expressed predominantly in the rhabdomeres of photoreceptor cells.

It is found in the membrane. The protein resides in the cell projection. Its subcellular location is the rhabdomere membrane. Its function is as follows. A light-sensitive calcium channel that is required for inositide-mediated Ca(2+) entry in the retina during phospholipase C (PLC)-mediated phototransduction. Required for vision in the dark and in dim light. Binds calmodulin. Trp and trpl act together in the light response, although it is unclear whether as heteromultimers or distinct units. Also forms a functional cation channel with Trpgamma. Activated by fatty acids, metabolic stress, inositols and GTP-binding proteins. The chain is Transient-receptor-potential-like protein (trpl) from Drosophila melanogaster (Fruit fly).